We begin with the raw amino-acid sequence, 538 residues long: Phosphoenolpyruvate carboxykinase (ATP) (538 aa).

Residue arginine 64 coordinates substrate. Residues asparagine 149 and phenylalanine 151 each coordinate Ca(2+). 2 residues coordinate substrate: tyrosine 206 and lysine 212. ATP-binding positions include lysine 212, histidine 231, and 247–255 (GLSGTGKTT). 2 residues coordinate Mn(2+): lysine 212 and histidine 231. Aspartate 268 provides a ligand contact to Mn(2+). ATP is bound by residues glutamate 296, arginine 332, 447-448 (RI), and threonine 453. Arginine 332 provides a ligand contact to substrate.

This sequence belongs to the phosphoenolpyruvate carboxykinase (ATP) family. Monomer. Mn(2+) serves as cofactor.

The protein resides in the cytoplasm. It catalyses the reaction oxaloacetate + ATP = phosphoenolpyruvate + ADP + CO2. The protein operates within carbohydrate biosynthesis; gluconeogenesis. Allosterically activated by calcium. Its function is as follows. Involved in the gluconeogenesis. Catalyzes the conversion of oxaloacetate (OAA) to phosphoenolpyruvate (PEP) through direct phosphoryl transfer between the nucleoside triphosphate and OAA. The sequence is that of Phosphoenolpyruvate carboxykinase (ATP) from Salmonella typhimurium (strain LT2 / SGSC1412 / ATCC 700720).